The sequence spans 170 residues: MVKKTIRVMVEGGKATPGPPLGPTLSPYKVNIPQVVKAINDATKDFEGLSVPVEITIDIDTKEFEVRVGIPTTTALLMKEAGAKQPTGDPAHQKIGNISFEQVVKVAILKRDSLTAKTLRAAVKTVLGTARSIGITVDGKDPKEVQKLVDEGVYDEILSRYEEEWSKGGQ.

It belongs to the universal ribosomal protein uL11 family. Part of the ribosomal stalk of the 50S ribosomal subunit. Interacts with L10 and the large rRNA to form the base of the stalk. L10 forms an elongated spine to which L12 dimers bind in a sequential fashion forming a multimeric L10(L12)X complex.

In terms of biological role, forms part of the ribosomal stalk which helps the ribosome interact with GTP-bound translation factors. This Desulfurococcus amylolyticus (strain DSM 18924 / JCM 16383 / VKM B-2413 / 1221n) (Desulfurococcus kamchatkensis) protein is Large ribosomal subunit protein uL11.